The primary structure comprises 209 residues: ATP-dependent Clp protease proteolytic subunit 1 (209 aa).

S109 (nucleophile) is an active-site residue. H134 is an active-site residue.

The protein belongs to the peptidase S14 family. As to quaternary structure, fourteen ClpP subunits assemble into 2 heptameric rings which stack back to back to give a disk-like structure with a central cavity, resembling the structure of eukaryotic proteasomes.

The protein resides in the cytoplasm. It catalyses the reaction Hydrolysis of proteins to small peptides in the presence of ATP and magnesium. alpha-casein is the usual test substrate. In the absence of ATP, only oligopeptides shorter than five residues are hydrolyzed (such as succinyl-Leu-Tyr-|-NHMec, and Leu-Tyr-Leu-|-Tyr-Trp, in which cleavage of the -Tyr-|-Leu- and -Tyr-|-Trp bonds also occurs).. Its function is as follows. Cleaves peptides in various proteins in a process that requires ATP hydrolysis. Has a chymotrypsin-like activity. Plays a major role in the degradation of misfolded proteins. In Corynebacterium diphtheriae (strain ATCC 700971 / NCTC 13129 / Biotype gravis), this protein is ATP-dependent Clp protease proteolytic subunit 1.